We begin with the raw amino-acid sequence, 103 residues long: Small ribosomal subunit protein uS10 (103 aa).

It belongs to the universal ribosomal protein uS10 family. As to quaternary structure, part of the 30S ribosomal subunit.

Functionally, involved in the binding of tRNA to the ribosomes. The chain is Small ribosomal subunit protein uS10 from Laribacter hongkongensis (strain HLHK9).